The following is a 253-amino-acid chain: 3-deoxy-manno-octulosonate cytidylyltransferase (253 aa).

This sequence belongs to the KdsB family.

The protein resides in the cytoplasm. The enzyme catalyses 3-deoxy-alpha-D-manno-oct-2-ulosonate + CTP = CMP-3-deoxy-beta-D-manno-octulosonate + diphosphate. Its pathway is nucleotide-sugar biosynthesis; CMP-3-deoxy-D-manno-octulosonate biosynthesis; CMP-3-deoxy-D-manno-octulosonate from 3-deoxy-D-manno-octulosonate and CTP: step 1/1. The protein operates within bacterial outer membrane biogenesis; lipopolysaccharide biosynthesis. Functionally, activates KDO (a required 8-carbon sugar) for incorporation into bacterial lipopolysaccharide in Gram-negative bacteria. This chain is 3-deoxy-manno-octulosonate cytidylyltransferase, found in Acinetobacter baumannii (strain AYE).